Consider the following 154-residue polypeptide: Xanthine-guanine phosphoribosyltransferase (154 aa).

5-phospho-alpha-D-ribose 1-diphosphate contacts are provided by residues 38–39 (RG), K71, and 90–98 (DDLVDTGGT). K71 is a GMP binding site. D91 contacts Mg(2+). The guanine site is built by D94 and I137. Residues D94 and I137 each coordinate xanthine. GMP contacts are provided by residues 94-98 (DTGGT) and 136-137 (WI).

This sequence belongs to the purine/pyrimidine phosphoribosyltransferase family. XGPT subfamily. Homotetramer. It depends on Mg(2+) as a cofactor.

It localises to the cell inner membrane. It catalyses the reaction GMP + diphosphate = guanine + 5-phospho-alpha-D-ribose 1-diphosphate. It carries out the reaction XMP + diphosphate = xanthine + 5-phospho-alpha-D-ribose 1-diphosphate. The catalysed reaction is IMP + diphosphate = hypoxanthine + 5-phospho-alpha-D-ribose 1-diphosphate. It functions in the pathway purine metabolism; GMP biosynthesis via salvage pathway; GMP from guanine: step 1/1. Its pathway is purine metabolism; XMP biosynthesis via salvage pathway; XMP from xanthine: step 1/1. Its function is as follows. Purine salvage pathway enzyme that catalyzes the transfer of the ribosyl-5-phosphate group from 5-phospho-alpha-D-ribose 1-diphosphate (PRPP) to the N9 position of the 6-oxopurines guanine and xanthine to form the corresponding ribonucleotides GMP (guanosine 5'-monophosphate) and XMP (xanthosine 5'-monophosphate), with the release of PPi. To a lesser extent, also acts on hypoxanthine. The protein is Xanthine-guanine phosphoribosyltransferase of Buchnera aphidicola subsp. Schizaphis graminum (strain Sg).